Consider the following 117-residue polypeptide: Putative membrane protein insertion efficiency factor (117 aa).

The protein belongs to the UPF0161 family.

It is found in the cell inner membrane. Its function is as follows. Could be involved in insertion of integral membrane proteins into the membrane. The sequence is that of Putative membrane protein insertion efficiency factor from Nitrobacter winogradskyi (strain ATCC 25391 / DSM 10237 / CIP 104748 / NCIMB 11846 / Nb-255).